Reading from the N-terminus, the 367-residue chain is Selenoprotein Pa (367 aa).

The N-terminal stretch at 1–19 is a signal peptide; it reads MWKALSLTLALCLLVGCSA. Position 59 (Sec59) is a non-standard amino acid, selenocysteine. N-linked (GlcNAc...) asparagine glycosylation occurs at Asn109. A compositionally biased stretch (basic and acidic residues) spans 191–220; that stretch reads EVNKPVEEEPRQDHGHHEHGHHEHQGEAER. Residues 191–241 form a disordered region; the sequence is EVNKPVEEEPRQDHGHHEHGHHEHQGEAERHRHGHHHPHHHHHHHRGQQQV. The segment covering 221–237 has biased composition (basic residues); it reads HRHGHHHPHHHHHHHRG. Residues Sec267, Sec273, Sec279, Sec290, Sec292, Sec294, Sec310, Sec320, Sec322, Sec336, Sec338, Sec346, Sec353, Sec355, Sec362, and Sec364 are each a non-standard amino acid (selenocysteine). Residues 309–367 form a disordered region; it reads LUHCDEPLPASUPUQGLKEQDNHIKETUQURPAPPAEUELSQPTUVUPAGDATUGURKK. A compositionally biased stretch (basic and acidic residues) spans 326-336; it reads KEQDNHIKETU.

This sequence belongs to the selenoprotein P family.

It is found in the secreted. In terms of biological role, might be responsible for some of the extracellular antioxidant defense properties of selenium or might be involved in the transport of selenium. This is Selenoprotein Pa (sepp1a) from Danio rerio (Zebrafish).